The following is a 111-amino-acid chain: Cell division topological specificity factor (111 aa).

It belongs to the MinE family.

In terms of biological role, prevents the cell division inhibition by proteins MinC and MinD at internal division sites while permitting inhibition at polar sites. This ensures cell division at the proper site by restricting the formation of a division septum at the midpoint of the long axis of the cell. The protein is Cell division topological specificity factor of Prochlorococcus marinus (strain MIT 9312).